The sequence spans 492 residues: Fascin-2 (492 aa).

Belongs to the fascin family. As to expression, expressed in the inner ear. Abundant in the utricle.

It is found in the cytoplasm. It localises to the cytoskeleton. The protein localises to the cell projection. The protein resides in the stereocilium. Its function is as follows. Acts as an actin bundling protein. May play a pivotal role in photoreceptor cell-specific events, such as disk morphogenesis. Important for maintaining functional hair-cell bundles in the inner ear. May stiffen the longer stereocilia of hair-cell bundles in the inner ear enabling better force transmission to tip links. The polypeptide is Fascin-2 (Fscn2) (Mus musculus (Mouse)).